The chain runs to 292 residues: Homoserine kinase (292 aa).

81 to 91 contacts ATP; it reads RPKSGLGSSGA.

This sequence belongs to the GHMP kinase family. Homoserine kinase subfamily.

It localises to the cytoplasm. It catalyses the reaction L-homoserine + ATP = O-phospho-L-homoserine + ADP + H(+). Its pathway is amino-acid biosynthesis; L-threonine biosynthesis; L-threonine from L-aspartate: step 4/5. In terms of biological role, catalyzes the ATP-dependent phosphorylation of L-homoserine to L-homoserine phosphate. The protein is Homoserine kinase of Pyrococcus furiosus (strain ATCC 43587 / DSM 3638 / JCM 8422 / Vc1).